Reading from the N-terminus, the 875-residue chain is Ubiquitin-protein ligase E3A (875 aa).

The C4-type; atypical zinc-finger motif lies at 44-83 (CGNEACTNEFCASCPTFLRMDNNAAAIKALELYKINAKLC). Residues 175-186 (KEELKSLQAKDE) show a composition bias toward basic and acidic residues. The tract at residues 175–226 (KEELKSLQAKDEDKDEDEKEKAACSAAAMEEDSEASSSRIGDSSQGDNNLQK) is disordered. The segment covering 213 to 225 (RIGDSSQGDNNLQ) has biased composition (polar residues). Serine 218 carries the phosphoserine modification. The segment at 401 to 418 (IPESSELTLQELLGEERR) is E6-binding. Residues 418 to 517 (RNKKGPRVDP…TVLYSLVQGQ (100 aa)) are interaction with HCV core protein. A Phosphotyrosine; by ABL1 modification is found at tyrosine 659. The HECT domain maps to 776–875 (YDGGYTRDSV…ITYAKGFGML (100 aa)). The Glycyl thioester intermediate role is filled by cysteine 843.

As to quaternary structure, the active form is probably a homotrimer. Binds UBQLN1 and UBQLN2. Interacts with the 26S proteasome. Interacts with BPY2. Interacts with HIF1AN, MAPK6 and NEURL4; interaction with MAPK6 may be mediated by NEURL4. Interacts with the proteasomal subunit PSMD4. Interacts with ESR1 and WBP2. Interacts with BMAL1. Interacts with ARC. (Microbial infection) Interacts with HCV core protein and targets it to degradation. In terms of assembly, (Microbial infection) Interacts with the E6 protein of the cancer-associated human papillomavirus types 16 and 18. The E6/E6-AP complex binds to and targets the p53/TP53 tumor-suppressor protein for ubiquitin-mediated proteolysis. Phosphorylation at Tyr-659 by ABL1 impairs E3 ligase activity and protects p53/TP53 from degradation in (HPV)-infected cells.

The protein localises to the cytoplasm. It is found in the nucleus. It carries out the reaction S-ubiquitinyl-[E2 ubiquitin-conjugating enzyme]-L-cysteine + [acceptor protein]-L-lysine = [E2 ubiquitin-conjugating enzyme]-L-cysteine + N(6)-ubiquitinyl-[acceptor protein]-L-lysine.. It participates in protein modification; protein ubiquitination. E3 ubiquitin-protein ligase which accepts ubiquitin from an E2 ubiquitin-conjugating enzyme in the form of a thioester and transfers it to its substrates. Several substrates have been identified including the BMAL1, ARC, LAMTOR1, RAD23A and RAD23B, MCM7 (which is involved in DNA replication), annexin A1, the PML tumor suppressor, and the cell cycle regulator CDKN1B. Additionally, may function as a cellular quality control ubiquitin ligase by helping the degradation of the cytoplasmic misfolded proteins. Finally, UBE3A also promotes its own degradation in vivo. Plays an important role in the regulation of the circadian clock: involved in the ubiquitination of the core clock component BMAL1, leading to its proteasomal degradation. Acts as transcriptional coactivator of progesterone receptor PGR upon progesterone hormone activation. Acts as a regulator of synaptic development by mediating ubiquitination and degradation of ARC. Required for synaptic remodeling in neurons by mediating ubiquitination and degradation of LAMTOR1, thereby limiting mTORC1 signaling and activity-dependent synaptic remodeling. Synergizes with WBP2 in enhancing PGR activity. Functionally, (Microbial infection) Catalyzes the high-risk human papilloma virus E6-mediated ubiquitination of p53/TP53, contributing to the neoplastic progression of cells infected by these viruses. In Homo sapiens (Human), this protein is Ubiquitin-protein ligase E3A.